Reading from the N-terminus, the 92-residue chain is Acylphosphatase (92 aa).

Residues glutamine 5 to aspartate 92 enclose the Acylphosphatase-like domain. Catalysis depends on residues arginine 20 and asparagine 38.

This sequence belongs to the acylphosphatase family.

It catalyses the reaction an acyl phosphate + H2O = a carboxylate + phosphate + H(+). The polypeptide is Acylphosphatase (acyP) (Sorangium cellulosum (strain So ce56) (Polyangium cellulosum (strain So ce56))).